A 157-amino-acid chain; its full sequence is 2-C-methyl-D-erythritol 2,4-cyclodiphosphate synthase (157 aa).

2 residues coordinate a divalent metal cation: D9 and H11. 4-CDP-2-C-methyl-D-erythritol 2-phosphate is bound by residues 9–11 and 35–36; these read DVH and HS. H43 is a binding site for a divalent metal cation. 4-CDP-2-C-methyl-D-erythritol 2-phosphate is bound by residues 57–59, 62–66, 101–107, 133–136, F140, and R143; these read DIG, FPDTD, AEKPKMA, and TTTE.

It belongs to the IspF family. As to quaternary structure, homotrimer. The cofactor is a divalent metal cation.

The enzyme catalyses 4-CDP-2-C-methyl-D-erythritol 2-phosphate = 2-C-methyl-D-erythritol 2,4-cyclic diphosphate + CMP. The protein operates within isoprenoid biosynthesis; isopentenyl diphosphate biosynthesis via DXP pathway; isopentenyl diphosphate from 1-deoxy-D-xylulose 5-phosphate: step 4/6. In terms of biological role, involved in the biosynthesis of isopentenyl diphosphate (IPP) and dimethylallyl diphosphate (DMAPP), two major building blocks of isoprenoid compounds. Catalyzes the conversion of 4-diphosphocytidyl-2-C-methyl-D-erythritol 2-phosphate (CDP-ME2P) to 2-C-methyl-D-erythritol 2,4-cyclodiphosphate (ME-CPP) with a corresponding release of cytidine 5-monophosphate (CMP). In Listeria monocytogenes serovar 1/2a (strain ATCC BAA-679 / EGD-e), this protein is 2-C-methyl-D-erythritol 2,4-cyclodiphosphate synthase.